Here is a 274-residue protein sequence, read N- to C-terminus: Rhamnulose-1-phosphate aldolase (274 aa).

The active site involves Glu-117. Zn(2+)-binding residues include His-141, His-143, and His-212.

The protein belongs to the aldolase class II family. RhaD subfamily. In terms of assembly, homotetramer. Requires Zn(2+) as cofactor.

It localises to the cytoplasm. It carries out the reaction L-rhamnulose 1-phosphate = (S)-lactaldehyde + dihydroxyacetone phosphate. It participates in carbohydrate degradation; L-rhamnose degradation; glycerone phosphate from L-rhamnose: step 3/3. Functionally, catalyzes the reversible cleavage of L-rhamnulose-1-phosphate to dihydroxyacetone phosphate (DHAP) and L-lactaldehyde. The polypeptide is Rhamnulose-1-phosphate aldolase (Yersinia pseudotuberculosis serotype IB (strain PB1/+)).